We begin with the raw amino-acid sequence, 269 residues long: Ubiquinone/menaquinone biosynthesis C-methyltransferase UbiE (269 aa).

Residues Thr92, Asp113, and 141–142 (NA) each bind S-adenosyl-L-methionine.

Belongs to the class I-like SAM-binding methyltransferase superfamily. MenG/UbiE family.

The enzyme catalyses a 2-demethylmenaquinol + S-adenosyl-L-methionine = a menaquinol + S-adenosyl-L-homocysteine + H(+). It catalyses the reaction a 2-methoxy-6-(all-trans-polyprenyl)benzene-1,4-diol + S-adenosyl-L-methionine = a 5-methoxy-2-methyl-3-(all-trans-polyprenyl)benzene-1,4-diol + S-adenosyl-L-homocysteine + H(+). Its pathway is quinol/quinone metabolism; menaquinone biosynthesis; menaquinol from 1,4-dihydroxy-2-naphthoate: step 2/2. The protein operates within cofactor biosynthesis; ubiquinone biosynthesis. Methyltransferase required for the conversion of demethylmenaquinol (DMKH2) to menaquinol (MKH2) and the conversion of 2-polyprenyl-6-methoxy-1,4-benzoquinol (DDMQH2) to 2-polyprenyl-3-methyl-6-methoxy-1,4-benzoquinol (DMQH2). The protein is Ubiquinone/menaquinone biosynthesis C-methyltransferase UbiE of Brucella suis (strain ATCC 23445 / NCTC 10510).